The primary structure comprises 173 residues: Orotate phosphoribosyltransferase (173 aa).

Residues Arg87, Lys88, Lys91, and 113-121 (EDIATTGQS) each bind 5-phospho-alpha-D-ribose 1-diphosphate. Orotate is bound by residues Thr117 and Arg145.

This sequence belongs to the purine/pyrimidine phosphoribosyltransferase family. PyrE subfamily. As to quaternary structure, homodimer. Requires Mg(2+) as cofactor.

It catalyses the reaction orotidine 5'-phosphate + diphosphate = orotate + 5-phospho-alpha-D-ribose 1-diphosphate. The protein operates within pyrimidine metabolism; UMP biosynthesis via de novo pathway; UMP from orotate: step 1/2. Catalyzes the transfer of a ribosyl phosphate group from 5-phosphoribose 1-diphosphate to orotate, leading to the formation of orotidine monophosphate (OMP). The polypeptide is Orotate phosphoribosyltransferase (Natronomonas pharaonis (strain ATCC 35678 / DSM 2160 / CIP 103997 / JCM 8858 / NBRC 14720 / NCIMB 2260 / Gabara) (Halobacterium pharaonis)).